Consider the following 314-residue polypeptide: DNA topoisomerase 1B (314 aa).

One can recognise a Topo IB-type catalytic domain in the interval 77-314 (VQNRNAKRDR…VDHVKSSTDG (238 aa)). Residue Y274 is the O-(3'-phospho-DNA)-tyrosine intermediate of the active site.

The protein belongs to the type IB topoisomerase family.

It catalyses the reaction ATP-independent breakage of single-stranded DNA, followed by passage and rejoining.. Functionally, releases the supercoiling and torsional tension of DNA introduced during the DNA replication and transcription by transiently cleaving and rejoining one strand of the DNA duplex. Introduces a single-strand break via transesterification at the specific target site 5'-[CT]CCTTp site in duplex DNA. The scissile phosphodiester is attacked by the catalytic tyrosine of the enzyme, resulting in the formation of a DNA-(3'-phosphotyrosyl)-enzyme intermediate and the expulsion of a 5'-OH DNA strand. The free DNA strand then undergoes passage around the unbroken strand thus removing DNA supercoils. Finally, in the religation step, the DNA 5'-OH attacks the covalent intermediate to expel the active-site tyrosine and restore the DNA phosphodiester backbone. This is DNA topoisomerase 1B (TOP1) from Vaccinia virus (strain Ankara) (VACV).